Reading from the N-terminus, the 179-residue chain is MGILFTRIWRLFNHQEHKVIIVGLDNAGKTTILYQFSMNEVVHTSPTIGSNVEEIVVNNTRFLMWDIGGQESLRSSWNTYYTNTEFVIVVVDSTDRERISVTREELYKMLAHEDLRKAGLLIFANKQDVKECMTVAEISQFLKLTSIKDHQWHIQACCALTGEGLCQGLEWMMSRLKIR.

The N-myristoyl glycine moiety is linked to residue Gly-2. GTP contacts are provided by residues Gly-23–Thr-30, Asp-66–Gln-70, Asn-125–Asp-128, and Ala-159.

Belongs to the small GTPase superfamily. Arf family. Low amounts were found in most tissues examined with highest levels in brain, intestine and thymus.

In terms of biological role, lacks ADP-ribosylation enhancing activity. The sequence is that of ADP-ribosylation factor-like protein 5A (Arl5a) from Rattus norvegicus (Rat).